The following is a 314-amino-acid chain: Protoheme IX farnesyltransferase (314 aa).

The next 8 membrane-spanning stretches (helical) occupy residues 31 to 51, 52 to 72, 119 to 139, 152 to 172, 179 to 199, 225 to 245, 247 to 267, and 284 to 304; these read VMSLVIFTALVGMAMAPGHFH, PVLAITSLLCIAVGAGASGAL, ILVNWIAGALLAFTIFFYVVI, IVIGGAAGALPPVVAWAAVTG, LLLFAIIFFWTPPHFWALALF, ILLYTIVLIAVAAAPWALGYF, AVYGVVSLILGAGMLVLAINV, and FAFSILYLFALFATLLAEVVF.

The protein belongs to the UbiA prenyltransferase family. Protoheme IX farnesyltransferase subfamily.

The protein resides in the cell inner membrane. It catalyses the reaction heme b + (2E,6E)-farnesyl diphosphate + H2O = Fe(II)-heme o + diphosphate. It participates in porphyrin-containing compound metabolism; heme O biosynthesis; heme O from protoheme: step 1/1. Functionally, converts heme B (protoheme IX) to heme O by substitution of the vinyl group on carbon 2 of heme B porphyrin ring with a hydroxyethyl farnesyl side group. The sequence is that of Protoheme IX farnesyltransferase from Bradyrhizobium diazoefficiens (strain JCM 10833 / BCRC 13528 / IAM 13628 / NBRC 14792 / USDA 110).